The sequence spans 379 residues: Sialidase-2 (379 aa).

An FRIP motif motif is present at residues 20–23; it reads YRIP. Residues Arg21 and Arg41 each contribute to the substrate site. Asp46 acts as the Proton acceptor in catalysis. A BNR 1 repeat occupies 127–138; sequence VSSTDHGRTWSP. Tyr179 and Tyr181 together coordinate substrate. Residues 197-208 form a BNR 2 repeat; that stretch reads FISLDHGHTWKL. Substrate-binding residues include Glu218, Arg237, and Arg303. Arg303 is an active-site residue. The Nucleophile role is filled by Tyr333. Glu354 is a catalytic residue.

Belongs to the glycosyl hydrolase 33 family. Highly expressed in heart.

It localises to the cytoplasm. The protein localises to the cytosol. The enzyme catalyses Hydrolysis of alpha-(2-&gt;3)-, alpha-(2-&gt;6)-, alpha-(2-&gt;8)- glycosidic linkages of terminal sialic acid residues in oligosaccharides, glycoproteins, glycolipids, colominic acid and synthetic substrates.. It catalyses the reaction a ganglioside GD1a + H2O = a ganglioside GM1 + N-acetylneuraminate. It carries out the reaction a ganglioside GM1 + H2O = a ganglioside GA1 + N-acetylneuraminate. The catalysed reaction is a ganglioside GT1b + H2O = a ganglioside GD1b + N-acetylneuraminate. The enzyme catalyses a ganglioside GD1b + H2O = a ganglioside GM1 + N-acetylneuraminate. It catalyses the reaction a ganglioside GD3 + H2O = a ganglioside GM3 + N-acetylneuraminate. It carries out the reaction a ganglioside GM3 + H2O = a beta-D-galactosyl-(1-&gt;4)-beta-D-glucosyl-(1&lt;-&gt;1)-ceramide + N-acetylneuraminate. The catalysed reaction is a ganglioside GM2 + H2O = a ganglioside GA2 + N-acetylneuraminate. The enzyme catalyses a neolactoside IV(3)-alpha-NeuAc-nLc4Cer(d18:1(4E)) + H2O = a neolactoside nLc4Cer(d18:1(4E)) + N-acetylneuraminate. It catalyses the reaction N-acetyl-alpha-neuraminosyl-(2-&gt;3)-beta-D-galactosyl-(1-&gt;4)-D-glucose + H2O = lactose + N-acetylneuraminate. Exo-alpha-sialidase that catalyzes the hydrolytic cleavage of the terminal sialic acid (N-acetylneuraminic acid, Neu5Ac) of a glycan moiety in the catabolism of glycolipids, glycoproteins and oligosacharides. Recognizes sialyl linkage positions of the glycan moiety as well as the supramolecular organization of the sialoglycoconjugate. Displays preference for alpha-(2-&gt;3)-sialylated GD1a and GT1B gangliosides over alpha-(2-&gt;8)-sialylated GD1b, in both monomeric forms and micelles. Hydrolyzes exclusively monomeric GM1 ganglioside, but has no activity toward the miscellar form. Has lower sialidase activity for glycoproteins such as fetuin and TF/transferrin that carry a mixture of alpha-(2-&gt;3) and alpha-(2-&gt;6)-sialyl linkages. Cleaves milk oligosaccharide alpha-(2-&gt;3)-sialyllactose, but is inactive toward isomer alpha-(2-&gt;6)-sialyllactose isomer. Has no activity toward colominic acid, a homomer of alpha-(2-&gt;8)-linked Neu5Ac residues. The chain is Sialidase-2 (Neu2) from Mus musculus (Mouse).